A 144-amino-acid chain; its full sequence is Large ribosomal subunit protein uL11 (144 aa).

This sequence belongs to the universal ribosomal protein uL11 family. Part of the ribosomal stalk of the 50S ribosomal subunit. Interacts with L10 and the large rRNA to form the base of the stalk. L10 forms an elongated spine to which L12 dimers bind in a sequential fashion forming a multimeric L10(L12)X complex. In terms of processing, one or more lysine residues are methylated.

In terms of biological role, forms part of the ribosomal stalk which helps the ribosome interact with GTP-bound translation factors. The polypeptide is Large ribosomal subunit protein uL11 (Corynebacterium glutamicum (strain R)).